A 276-amino-acid chain; its full sequence is Large ribosomal subunit protein uL2 (276 aa).

Positions 223–276 (GVAMNPVDHPHGGGEGRGKGHHPTSPWGLPTKGYKTRRGKRPSDKFIVRRRNEA) are disordered. 2 stretches are compositionally biased toward basic and acidic residues: residues 230 to 240 (DHPHGGGEGRG) and 263 to 276 (RPSDKFIVRRRNEA).

The protein belongs to the universal ribosomal protein uL2 family. Part of the 50S ribosomal subunit. Forms a bridge to the 30S subunit in the 70S ribosome.

Its function is as follows. One of the primary rRNA binding proteins. Required for association of the 30S and 50S subunits to form the 70S ribosome, for tRNA binding and peptide bond formation. It has been suggested to have peptidyltransferase activity; this is somewhat controversial. Makes several contacts with the 16S rRNA in the 70S ribosome. This Thermotoga petrophila (strain ATCC BAA-488 / DSM 13995 / JCM 10881 / RKU-1) protein is Large ribosomal subunit protein uL2.